The chain runs to 309 residues: Olfactory receptor 5H17 (309 aa).

Residues 1–28 (MEKKNETLWTEFVLTGLTCLPQWKPLLF) are Extracellular-facing. N-linked (GlcNAc...) asparagine glycosylation occurs at asparagine 5. A helical transmembrane segment spans residues 29 to 49 (LVFLVIYFMTIVGNLGLITLI). Residues 50–56 (WNDPHLH) are Cytoplasmic-facing. Residues 57-77 (IPMYLFLSNLAFVDTWLSSTV) traverse the membrane as a helical segment. Over 78–93 (TPRMLFNLLDKGKVIS) the chain is Extracellular. The helical transmembrane segment at 94–114 (VAECKTQFFSFAISVTTECFL) threads the bilayer. Residues cysteine 97 and cysteine 189 are joined by a disulfide bond. Topologically, residues 115–144 (LAAMAYDRYAAICNPLLYPVIMTNRLCVRL) are cytoplasmic. A helical membrane pass occupies residues 145-165 (LALSFIGGFLHAVIHESFLSR). The Extracellular portion of the chain corresponds to 166-198 (LTFCNSNIIYHFYCDVIPLLKISCTDPSLNYLI). Residues 199–219 (IFIFSGSIQVFTIMTVLISYT) form a helical membrane-spanning segment. The Cytoplasmic segment spans residues 220–239 (FVLFTILKKKSDKGIRKAFS). Residues 240 to 260 (TCGAHLLSVSLYYGPLLFMYV) traverse the membrane as a helical segment. At 261 to 271 (HPASSEVDDQD) the chain is on the extracellular side. The chain crosses the membrane as a helical span at residues 272–292 (MILSLFYTVIIPVLNPIIYSL). Residues 293–309 (RNKQVIDSLKKMLKMMV) are Cytoplasmic-facing.

The protein belongs to the G-protein coupled receptor 1 family.

It is found in the cell membrane. In terms of biological role, potential odorant receptor. This is Olfactory receptor 5H17 from Mus musculus (Mouse).